A 244-amino-acid polypeptide reads, in one-letter code: Mast cell protease 2 (244 aa).

Residues 1–18 (MQALLFLMALLLPSGAGA) form the signal peptide. The propeptide at 19 to 20 (EE) is activation peptide. Residues 21–242 (IIGGVEAKPH…YLPWIYKVLK (222 aa)) form the Peptidase S1 domain. Asparagine 44 is a glycosylation site (N-linked (GlcNAc...) asparagine). Cysteine 50 and cysteine 66 form a disulfide bridge. Residues histidine 65 and aspartate 109 each act as charge relay system in the active site. Cystine bridges form between cysteine 143-cysteine 208 and cysteine 174-cysteine 187. The active-site Charge relay system is serine 202.

It belongs to the peptidase S1 family. Granzyme subfamily. Mucosal mast cells.

In Mus musculus (Mouse), this protein is Mast cell protease 2 (Mcpt2).